An 865-amino-acid polypeptide reads, in one-letter code: cGMP-specific 3',5'-cyclic phosphodiesterase (865 aa).

Low complexity predominate over residues 69-83 (CSCSSQQSSRADSSA). The interval 69-92 (CSCSSQQSSRADSSAPGTPTRKIS) is disordered. Ser92 bears the Phosphoserine mark. 2 GAF domains span residues 154 to 304 (DVTA…GIVL) and 336 to 493 (SLEV…GLGI). Residues 526–850 (ETKELQSLAA…QKWQALAEQQ (325 aa)) form the PDEase domain. His603 (proton donor) is an active-site residue. His607, His643, Asp644, and Asp754 together coordinate Zn(2+). Residue Asp644 coordinates Mg(2+). Position 807 (Gln807) interacts with 3',5'-cyclic GMP.

This sequence belongs to the cyclic nucleotide phosphodiesterase family. Zn(2+) serves as cofactor. Mg(2+) is required as a cofactor. Phosphorylation is regulated by binding of cGMP to the two allosteric sites. Phosphorylation by PRKG1 leads to its activation. In terms of tissue distribution, isoform PDE5A1 and isoform PDE5A2 are highly expressed in the cerebellum, hippocampus, retina, lung, heart, spleen, and thoracic artery. Isoform PDE5A1, but not isoform PDE5A2, is also abundantly expressed in the pylorus.

Its subcellular location is the cytoplasm. The protein localises to the cytosol. The catalysed reaction is 3',5'-cyclic GMP + H2O = GMP + H(+). The protein operates within purine metabolism; 3',5'-cyclic GMP degradation; GMP from 3',5'-cyclic GMP: step 1/1. Its activity is regulated as follows. Inhibited by zaprinast. Plays a role in signal transduction by regulating the intracellular concentration of cyclic nucleotides. This phosphodiesterase catalyzes the specific hydrolysis of cGMP to 5'-GMP. Specifically regulates nitric-oxide-generated cGMP. This Canis lupus familiaris (Dog) protein is cGMP-specific 3',5'-cyclic phosphodiesterase (PDE5A).